A 385-amino-acid chain; its full sequence is MTGALTPASTPALTLARDLIRAPSVTPDDGGAIGVLTAALRGLGFDVTDLPFGEGPARTPNLFARLGRSGPHLCFAGHTDVVPPGDGGWTSGPFEAALRDGCLYGRGACDMKGGIAAFVGAVARILESGRTLRGSVSLLITGDEEGPATFGTVKVLEWMAAHGQVPDFCVVGEPTNPDHLGDVIKIGRRGSLNARIVVPGIQGHVAYPHRADNPVHRLLAILSDLTARPLDQGTEWFEPSSLQVTTVDVGNEATNVIPGRATARLNIRFNDLHTGQGLADWIRGVAHVHAPGAEVTVQISGEAFRTEPTPELDMLAASIQAVTGRAPRLDTGGGTSDARFISRYCPVAEFGLVGASMHKVDEHVPVADLLALTDIYAAFLERLMG.

His-78 contacts Zn(2+). Asp-80 is a catalytic residue. Asp-110 is a Zn(2+) binding site. The Proton acceptor role is filled by Glu-144. Glu-145, Glu-173, and His-358 together coordinate Zn(2+).

This sequence belongs to the peptidase M20A family. DapE subfamily. As to quaternary structure, homodimer. It depends on Zn(2+) as a cofactor. Co(2+) is required as a cofactor.

It catalyses the reaction N-succinyl-(2S,6S)-2,6-diaminopimelate + H2O = (2S,6S)-2,6-diaminopimelate + succinate. It functions in the pathway amino-acid biosynthesis; L-lysine biosynthesis via DAP pathway; LL-2,6-diaminopimelate from (S)-tetrahydrodipicolinate (succinylase route): step 3/3. Catalyzes the hydrolysis of N-succinyl-L,L-diaminopimelic acid (SDAP), forming succinate and LL-2,6-diaminopimelate (DAP), an intermediate involved in the bacterial biosynthesis of lysine and meso-diaminopimelic acid, an essential component of bacterial cell walls. The polypeptide is Succinyl-diaminopimelate desuccinylase (Gluconacetobacter diazotrophicus (strain ATCC 49037 / DSM 5601 / CCUG 37298 / CIP 103539 / LMG 7603 / PAl5)).